The chain runs to 317 residues: Hydroxyacyl-CoA dehydrogenase ChsB1 (317 aa).

Positions 32, 51, 82, 83, 108, 168, 181, 185, and 215 each coordinate NAD(+). Catalysis depends on residues S168, Y181, and K185.

It belongs to the short-chain dehydrogenases/reductases (SDR) family. As to quaternary structure, homodimer, with 1 active site on each face.

It catalyses the reaction (22S)-hydroxy-3-oxo-chol-4-ene-24-oyl-CoA + NAD(+) = 3,22-dioxochol-4-en-24-oyl-CoA + NADH + H(+). Its pathway is steroid metabolism; cholesterol degradation. Functionally, a reversible dehydrogenase involved in cholesterol side-chain degradation. Catalyzes the oxidation of hydroxyl-cholesterol-CoA ester metabolic intermediate (22S)-HOCO-CoA (3-oxo-chol-4-ene-(22S)-hydroxy-24-oyl-CoA), the product of ChsH3, has no activity on (22R)-HOCO-CoA (the product of EchA19). Also acts on (3R)-hydroxyoctanoyl-CoA and 17-beta-hydroxyandrost-4-en-3-one, but not on 7-alpha-hydroxyandrost-4-en-3-one, uses NAD(+) but not NADP(+). The protein is Hydroxyacyl-CoA dehydrogenase ChsB1 of Mycobacterium tuberculosis (strain ATCC 25618 / H37Rv).